A 396-amino-acid polypeptide reads, in one-letter code: Probable sugar efflux transporter (396 aa).

12 consecutive transmembrane segments (helical) span residues 15 to 35 (VVTL…PVGL), 50 to 70 (VGIM…PFML), 81 to 101 (LICL…SWSF), 103 to 123 (VLVI…SITA), 136 to 156 (AQAL…GLPL), 170 to 190 (FFAI…LLPL), 209 to 229 (PALM…YTAY), 246 to 266 (FATA…VIFG), 275 to 295 (ALVS…LPAA), 299 to 319 (IHLG…GLGM), 333 to 353 (VAMA…ALVG), and 364 to 384 (MIGY…IIIF).

This sequence belongs to the major facilitator superfamily. SotB (TC 2.A.1.2) family.

The protein resides in the cell inner membrane. Functionally, involved in the efflux of sugars. The physiological role may be the reduction of the intracellular concentration of toxic sugars or sugar metabolites. The protein is Probable sugar efflux transporter of Escherichia coli O6:K15:H31 (strain 536 / UPEC).